The chain runs to 191 residues: Protein LURP-one-related 6 (191 aa).

Belongs to the LOR family.

Functionally, might be related to the phospholipid scramblase and tubby-like superfamily of membrane tethered transcription factors. The sequence is that of Protein LURP-one-related 6 from Arabidopsis thaliana (Mouse-ear cress).